The primary structure comprises 664 residues: Protein IQ-DOMAIN 28 (664 aa).

The tract at residues 1-85 (MGKTPGKWIK…DESKDNLESR (85 aa)) is disordered. The segment covering 51–64 (VDPPVVSSQPVPAS) has biased composition (low complexity). Positions 76-85 (DESKDNLESR) are enriched in basic and acidic residues. 3 consecutive IQ domains span residues 93 to 121 (LEQA…GIIR), 122 to 140 (LQAV…ATYS), and 144 to 170 (GIVK…QKKH). The segment at 106–116 (AHQARRAFRTL) is calmodulin-binding. Disordered stretches follow at residues 244–488 (EIPK…KEKD), 502–573 (DEKS…SGRK), and 637–664 (AKGS…DWKR). Residues 251 to 258 (KKRNYQAV) carry the Nuclear localization signal 1 motif. Residues 305–315 (DPLRNESDKAN) show a composition bias toward basic and acidic residues. Low complexity predominate over residues 339-353 (SPSLKRSSLSNGSKK). Positions 351–358 (SKKATLRS) match the Nuclear localization signal 2 motif. Composition is skewed to basic and acidic residues over residues 358–367 (SAEKKKKDIP), 427–447 (TEKE…KVLE), and 502–532 (DEKS…KCAD). Polar residues predominate over residues 536–547 (SSENGNVGSDNT). Over residues 652 to 664 (DITHKSTRTDWKR) the composition is skewed to basic and acidic residues.

It belongs to the IQD family. Binds to multiple calmodulin (CaM) in the presence of Ca(2+) and CaM-like proteins.

The protein resides in the nucleus. It is found in the cytoplasm. Its subcellular location is the cytoskeleton. Its function is as follows. May be involved in cooperative interactions with calmodulins or calmodulin-like proteins. Recruits calmodulin proteins to microtubules, thus being a potential scaffold in cellular signaling and trafficking. May associate with nucleic acids and regulate gene expression at the transcriptional or post-transcriptional level. This is Protein IQ-DOMAIN 28 from Arabidopsis thaliana (Mouse-ear cress).